A 406-amino-acid polypeptide reads, in one-letter code: Argininosuccinate synthase (406 aa).

An ATP-binding site is contributed by 8–16 (AYSGGLDTS). Tyr86 contributes to the L-citrulline binding site. Gly116 contacts ATP. Positions 118, 122, and 123 each coordinate L-aspartate. Residue Asn122 coordinates L-citrulline. L-citrulline is bound by residues Arg126, Ser174, Ser183, Glu259, and Tyr271.

Belongs to the argininosuccinate synthase family. Type 1 subfamily. As to quaternary structure, homotetramer.

It localises to the cytoplasm. It carries out the reaction L-citrulline + L-aspartate + ATP = 2-(N(omega)-L-arginino)succinate + AMP + diphosphate + H(+). It participates in amino-acid biosynthesis; L-arginine biosynthesis; L-arginine from L-ornithine and carbamoyl phosphate: step 2/3. The polypeptide is Argininosuccinate synthase (Oenococcus oeni (strain ATCC BAA-331 / PSU-1)).